The chain runs to 209 residues: UPF0174 protein HP_1587 (209 aa).

It belongs to the UPF0174 family.

The polypeptide is UPF0174 protein HP_1587 (Helicobacter pylori (strain ATCC 700392 / 26695) (Campylobacter pylori)).